A 647-amino-acid polypeptide reads, in one-letter code: Threonine--tRNA ligase (647 aa).

Residues 1 to 60 (MQVTIEDQSLEAAAGEACGQVLSRAVSGKRLKNAVACLVDGQPRDLAFPLPEDAHELALV) form the TGS domain. The tract at residues 242–533 (DHRKLGAQLD…LIEHTAGALP (292 aa)) is catalytic. The Zn(2+) site is built by Cys-334, His-385, and His-510.

The protein belongs to the class-II aminoacyl-tRNA synthetase family. Homodimer. Requires Zn(2+) as cofactor.

It is found in the cytoplasm. It catalyses the reaction tRNA(Thr) + L-threonine + ATP = L-threonyl-tRNA(Thr) + AMP + diphosphate + H(+). Functionally, catalyzes the attachment of threonine to tRNA(Thr) in a two-step reaction: L-threonine is first activated by ATP to form Thr-AMP and then transferred to the acceptor end of tRNA(Thr). Also edits incorrectly charged L-seryl-tRNA(Thr). In Solidesulfovibrio magneticus (strain ATCC 700980 / DSM 13731 / RS-1) (Desulfovibrio magneticus), this protein is Threonine--tRNA ligase.